The following is a 283-amino-acid chain: Polyprenyl-phosphate transporter (283 aa).

9 helical membrane passes run 27–47 (GTIA…SGIF), 51–71 (FWPS…AMGS), 85–105 (IPTM…LLKI), 112–132 (FTTK…VITL), 148–168 (TSLI…MLLP), 169–189 (GISG…MLAI), 197–217 (FAGL…FIIS), 230–250 (LMTF…VFPG), and 255–275 (IVMW…SLTL).

The protein belongs to the PopT family.

Its subcellular location is the cell membrane. With respect to regulation, active in alkaline conditions. Functionally, flippase that catalyzes the transport of undecaprenyl phosphate (UndP) across the cytoplasmic membrane, from the external side to the cytoplasmic side. Is involved in UndP recycling during peptidoglycan synthesis. Necessary for peptidoglycan maintenance. In Staphylococcus aureus (strain NCTC 8325 / PS 47), this protein is Polyprenyl-phosphate transporter.